Consider the following 759-residue polypeptide: Pseudocleavage protein nop-1 (759 aa).

Disordered stretches follow at residues 1–46 (MSAP…SSIF), 334–361 (KIFP…MDKK), 379–413 (LSVN…NLSQ), 440–495 (QSSR…KKER), and 732–759 (ESDG…GAKI). The span at 10–42 (DIHSDDRDHADHQTKKEKHWFEEKSEQNGENRR) shows a compositional bias: basic and acidic residues. A compositionally biased stretch (low complexity) spans 448–465 (TGNSSISSGVGSIASGTS). The span at 473–482 (GSRSGQSISR) shows a compositional bias: polar residues. Residues 485–495 (SRRDDEGKKER) show a composition bias toward basic and acidic residues. Over residues 736–759 (PASSNDDFDTQSTASTSTVFGAKI) the composition is skewed to polar residues.

It is found in the nucleus. The protein resides in the cytoplasm. Its subcellular location is the cell cortex. It localises to the cleavage furrow. In terms of biological role, required for formation of the pseudocleavage furrow during the first cleavage of the embryo and also mediates aster-induced furrowing during cytokinesis. Promotes cortical recruitment of ani-1 and nmy-2 during pseudocleavage and cytokinesis and promotes the accumulation of actin at furrowing regions. Regulates establishment of embryonic cell polarity. This Caenorhabditis elegans protein is Pseudocleavage protein nop-1 (nop-1).